We begin with the raw amino-acid sequence, 228 residues long: AA9 family lytic polysaccharide monooxygenase A (228 aa).

Residues His1 and His86 each contribute to the Cu(2+) site. His1 is subject to Methylhistidine. Intrachain disulfides connect Cys56–Cys178 and Cys97–Cys101. N-linked (GlcNAc...) asparagine glycosylation is present at Asn138. O2-binding residues include His164 and Gln173. Tyr175 contributes to the Cu(2+) binding site.

The protein belongs to the polysaccharide monooxygenase AA9 family. Cu(2+) serves as cofactor. Post-translationally, the catalytically essential N-terminal histidine His-22 is post-translationally modified by methylation to prevent protonation of the histidine side chain, and protect the critical active site of the enzyme from oxidative damage.

The protein resides in the secreted. The catalysed reaction is [(1-&gt;4)-beta-D-glucosyl]n+m + reduced acceptor + O2 = 4-dehydro-beta-D-glucosyl-[(1-&gt;4)-beta-D-glucosyl]n-1 + [(1-&gt;4)-beta-D-glucosyl]m + acceptor + H2O.. Its activity is regulated as follows. Small amounts of H(2)O(2) boost LPMO activity, while higher amounts lead to inactivation of the enzyme. Lytic polysaccharide monooxygenase (LPMO) that depolymerizes crystalline and amorphous polysaccharides via the oxidation of scissile alpha- or beta-(1-4)-glycosidic bonds, yielding C1 and C4 oxidation product. Catalysis by LPMOs requires the reduction of the active-site copper from Cu(II) to Cu(I) by a reducing agent and H(2)O(2) or O(2) as a cosubstrate. Is able to cleave cellulose and xylan to produce C1- and C4-oxidized products. This is AA9 family lytic polysaccharide monooxygenase A from Thermoascus aurantiacus.